Consider the following 318-residue polypeptide: MQIYLANPRGFCAGVDRAIAIVNEALLRFEPPIYVRHEVVHNKFVVSDLANRGAVFVEELHEVPDGSIVIFSAHGVSKAVEDEAERRDLTVFDATCPLVTKVHIEVAKFAQDGMDAVLIGHAGHPEVEGTMGRFNHRHGGRIHLVENESDVEALSVQDAERLAFVTQTTLSMDDTARVIDALREKFPHIQGPRKDDICYATQNRQDAVKHLASRCEVVLVVGSPNSSNSNRLRELAERMNCRAYLIDNATEMDINWFDGIQSVGVTAGASAPEVLIQEVLQQLQDWGGDLPSELSGIEENVTFSLPKALRIPMTQVGK.

Cys-12 is a [4Fe-4S] cluster binding site. Residues His-41 and His-74 each coordinate (2E)-4-hydroxy-3-methylbut-2-enyl diphosphate. Positions 41 and 74 each coordinate dimethylallyl diphosphate. Residues His-41 and His-74 each contribute to the isopentenyl diphosphate site. A [4Fe-4S] cluster-binding site is contributed by Cys-96. His-124 is a (2E)-4-hydroxy-3-methylbut-2-enyl diphosphate binding site. A dimethylallyl diphosphate-binding site is contributed by His-124. His-124 serves as a coordination point for isopentenyl diphosphate. The active-site Proton donor is the Glu-126. Residue Thr-168 coordinates (2E)-4-hydroxy-3-methylbut-2-enyl diphosphate. Cys-198 is a [4Fe-4S] cluster binding site. Positions 226, 227, 228, and 270 each coordinate (2E)-4-hydroxy-3-methylbut-2-enyl diphosphate. Dimethylallyl diphosphate contacts are provided by Ser-226, Ser-227, Asn-228, and Ser-270. Isopentenyl diphosphate contacts are provided by Ser-226, Ser-227, Asn-228, and Ser-270.

It belongs to the IspH family. The cofactor is [4Fe-4S] cluster.

It catalyses the reaction isopentenyl diphosphate + 2 oxidized [2Fe-2S]-[ferredoxin] + H2O = (2E)-4-hydroxy-3-methylbut-2-enyl diphosphate + 2 reduced [2Fe-2S]-[ferredoxin] + 2 H(+). It carries out the reaction dimethylallyl diphosphate + 2 oxidized [2Fe-2S]-[ferredoxin] + H2O = (2E)-4-hydroxy-3-methylbut-2-enyl diphosphate + 2 reduced [2Fe-2S]-[ferredoxin] + 2 H(+). Its pathway is isoprenoid biosynthesis; dimethylallyl diphosphate biosynthesis; dimethylallyl diphosphate from (2E)-4-hydroxy-3-methylbutenyl diphosphate: step 1/1. It functions in the pathway isoprenoid biosynthesis; isopentenyl diphosphate biosynthesis via DXP pathway; isopentenyl diphosphate from 1-deoxy-D-xylulose 5-phosphate: step 6/6. Functionally, catalyzes the conversion of 1-hydroxy-2-methyl-2-(E)-butenyl 4-diphosphate (HMBPP) into a mixture of isopentenyl diphosphate (IPP) and dimethylallyl diphosphate (DMAPP). Acts in the terminal step of the DOXP/MEP pathway for isoprenoid precursor biosynthesis. The sequence is that of 4-hydroxy-3-methylbut-2-enyl diphosphate reductase from Psychrobacter arcticus (strain DSM 17307 / VKM B-2377 / 273-4).